Reading from the N-terminus, the 105-residue chain is Endogenous retrovirus group K member 8 Rec protein (105 aa).

Positions 1 to 48 (MNPSEMQRKAPPRRRRHRNRAPLTHKMNKMVTSEEQMKLPSTKKAEPP) are disordered. The segment covering 10-20 (APPRRRRHRNR) has biased composition (basic residues). The short motif at 13–20 (RRRRHRNR) is the Nuclear localization signal element. The short motif at 50–59 (WAQLKKLTQL) is the Nuclear export signal element.

In terms of assembly, forms homodimers, homotrimers, and homotetramers via a C-terminal domain. Associates with XPO1 and with ZNF145.

The protein resides in the cytoplasm. Its subcellular location is the nucleus. It localises to the nucleolus. Retroviral replication requires the nuclear export and translation of unspliced, singly-spliced and multiply-spliced derivatives of the initial genomic transcript. Rec interacts with a highly structured RNA element (RcRE) present in the viral 3'LTR and recruits the cellular nuclear export machinery. This permits export to the cytoplasm of unspliced genomic or incompletely spliced subgenomic viral transcripts. This Homo sapiens (Human) protein is Endogenous retrovirus group K member 8 Rec protein (ERVK-8).